The chain runs to 603 residues: F-box only protein 46 (603 aa).

Positions 18–54 are disordered; sequence SKYSQNQPRPPSTALKPPVCPDTSSGTEPDHRPAHLE. S21 and S67 each carry phosphoserine. 4 disordered regions span residues 113–165, 235–301, 332–359, and 412–442; these read SRAS…SSGD, EAQR…TRAK, EASEGETPAPTRPEDTPPAPPPPPARDC, and QSRGPEGPPEPPPADIPSTVPGPDDSEGTTD. Residue T347 is modified to Phosphothreonine. Pro residues-rich tracts occupy residues 347-356 and 417-426; these read TPPAPPPPPA and EGPPEPPPAD. The region spanning 470-522 is the F-box domain; the sequence is RQYMLLLPEHVLVKIFSFLPTRALAALKCTCHHFKGIIEAFGVRATDSRWSRD.

Part of a SCF (SKP1-cullin-F-box) protein ligase complex SCF(FBXO46) composed of CUL1, SKP1, RBX1 and FBXO46. In terms of processing, phosphorylated by ATM in response to DNA damage, promoting ubiquitination and degradation by the SCF(FBXO31) complex. ATM-phosphorylated FBXO46 is ubiquitinated and degradaded by the SCF(FBXO31) complex in response to DNA damage.

It participates in protein modification; protein ubiquitination. Functionally, substrate-recognition component of the SCF(FBXO46) protein ligase complex, which mediates the ubiquitination and degradation of target proteins. In absence of stress, the SCF(FBXO46) complex catalyzes ubiquitination and degradation of MTOR-phosphorylated FBXO31. The chain is F-box only protein 46 (Fbxo46) from Mus musculus (Mouse).